Consider the following 186-residue polypeptide: Protein FAM219A (186 aa).

2 disordered regions span residues 1–47 (MMEE…NYKP) and 59–132 (ELAR…GYSS). The segment covering 67–81 (KNGTVGSPVNQQPKK) has biased composition (polar residues). Positions 123 to 132 (SRYSSSGYSS) are enriched in low complexity.

Belongs to the FAM219 family.

The polypeptide is Protein FAM219A (fam219a) (Danio rerio (Zebrafish)).